The sequence spans 158 residues: Inner membrane assembly complex subunit 17 (158 aa).

Residues Met-1–Leu-15 constitute a mitochondrion transit peptide. Topologically, residues Ala-16 to Phe-85 are mitochondrial matrix. A helical transmembrane segment spans residues Val-86 to Trp-108. Over Lys-109–Trp-158 the chain is Mitochondrial intermembrane. Residues Leu-110–Ser-140 adopt a coiled-coil conformation.

The protein belongs to the INA17 family. Component of the inner membrane assembly (INA) complex, composed of INA17 and INA22. Interacts with a subset of F(1)F(0)-ATP synthase subunits of the F(1)-domain and the peripheral stalk.

It localises to the mitochondrion inner membrane. Its function is as follows. Component of the INA complex (INAC) that promotes the biogenesis of mitochondrial F(1)F(0)-ATP synthase. INAC facilitates the assembly of the peripheral stalk and promotes the assembly of the catalytic F(1)-domain with the membrane-embedded F(0)-domain. The sequence is that of Inner membrane assembly complex subunit 17 from Kluyveromyces lactis (strain ATCC 8585 / CBS 2359 / DSM 70799 / NBRC 1267 / NRRL Y-1140 / WM37) (Yeast).